The chain runs to 213 residues: Dimethylamine corrinoid protein 1 (213 aa).

A B12-binding N-terminal domain is found at 1-90; sequence MSKEELLQEL…LMPEGSASSK (90 aa). The 123-residue stretch at 91-213 folds into the B12-binding domain; it reads MGVIVNGTVE…AVAKAKELLA (123 aa). Residue His104 coordinates methylcob(III)alamin.

It belongs to the methylamine corrinoid protein family.

Its pathway is one-carbon metabolism; methanogenesis from dimethylamine. Acts as a methyl group carrier between MtbB and MtbA. This is Dimethylamine corrinoid protein 1 (mtbC1) from Methanosarcina acetivorans (strain ATCC 35395 / DSM 2834 / JCM 12185 / C2A).